The chain runs to 189 residues: Peptidyl-tRNA hydrolase (189 aa).

Tyrosine 14 is a tRNA binding site. Histidine 19 functions as the Proton acceptor in the catalytic mechanism. TRNA is bound by residues phenylalanine 64, asparagine 66, and asparagine 112.

Belongs to the PTH family. Monomer.

It localises to the cytoplasm. It catalyses the reaction an N-acyl-L-alpha-aminoacyl-tRNA + H2O = an N-acyl-L-amino acid + a tRNA + H(+). Functionally, hydrolyzes ribosome-free peptidyl-tRNAs (with 1 or more amino acids incorporated), which drop off the ribosome during protein synthesis, or as a result of ribosome stalling. Catalyzes the release of premature peptidyl moieties from peptidyl-tRNA molecules trapped in stalled 50S ribosomal subunits, and thus maintains levels of free tRNAs and 50S ribosomes. The polypeptide is Peptidyl-tRNA hydrolase (Sphingopyxis alaskensis (strain DSM 13593 / LMG 18877 / RB2256) (Sphingomonas alaskensis)).